The chain runs to 251 residues: Triosephosphate isomerase (251 aa).

8–10 (NWK) provides a ligand contact to substrate. H97 serves as the catalytic Electrophile. E170 serves as the catalytic Proton acceptor. Substrate contacts are provided by residues G176, S215, and 236 to 237 (GG).

It belongs to the triosephosphate isomerase family. Homodimer.

It is found in the cytoplasm. It catalyses the reaction D-glyceraldehyde 3-phosphate = dihydroxyacetone phosphate. Its pathway is carbohydrate biosynthesis; gluconeogenesis. It functions in the pathway carbohydrate degradation; glycolysis; D-glyceraldehyde 3-phosphate from glycerone phosphate: step 1/1. Its function is as follows. Involved in the gluconeogenesis. Catalyzes stereospecifically the conversion of dihydroxyacetone phosphate (DHAP) to D-glyceraldehyde-3-phosphate (G3P). The protein is Triosephosphate isomerase of Nitratidesulfovibrio vulgaris (strain DSM 19637 / Miyazaki F) (Desulfovibrio vulgaris).